The chain runs to 380 residues: Cytochrome b (380 aa).

The next 4 membrane-spanning stretches (helical) occupy residues 33 to 53, 77 to 98, 113 to 133, and 178 to 198; these read FGSL…FLAM, WLIR…YLHI, WNVG…GYVL, and FFAF…LHFL. Residues histidine 83 and histidine 97 each coordinate heme b. Residues histidine 182 and histidine 196 each contribute to the heme b site. Residue histidine 201 coordinates a ubiquinone. Helical transmembrane passes span 226-246, 288-308, 320-340, and 347-367; these read YKDL…SLFS, LGGV…PILH, LTQI…WIGG, and FIIV…VIMP.

This sequence belongs to the cytochrome b family. As to quaternary structure, the cytochrome bc1 complex contains 3 respiratory subunits (MT-CYB, CYC1 and UQCRFS1), 2 core proteins (UQCRC1 and UQCRC2) and probably 6 low-molecular weight proteins. Heme b is required as a cofactor.

It localises to the mitochondrion inner membrane. Component of the ubiquinol-cytochrome c reductase complex (complex III or cytochrome b-c1 complex) that is part of the mitochondrial respiratory chain. The b-c1 complex mediates electron transfer from ubiquinol to cytochrome c. Contributes to the generation of a proton gradient across the mitochondrial membrane that is then used for ATP synthesis. The chain is Cytochrome b (mt-cyb) from Zeus faber (John Dory).